Here is a 240-residue protein sequence, read N- to C-terminus: Methylthioribulose-1-phosphate dehydratase (240 aa).

The segment covering 1-10 (MAQEIEKTNN) has biased composition (basic and acidic residues). Positions 1–20 (MAQEIEKTNNDHLVQSSDPE) are disordered. Cys-100 contacts substrate. The Zn(2+) site is built by His-117 and His-119. The active-site Proton donor/acceptor is Glu-146. Position 202 (His-202) interacts with Zn(2+).

It belongs to the aldolase class II family. MtnB subfamily. Zn(2+) is required as a cofactor.

The protein resides in the cytoplasm. It catalyses the reaction 5-(methylsulfanyl)-D-ribulose 1-phosphate = 5-methylsulfanyl-2,3-dioxopentyl phosphate + H2O. It participates in amino-acid biosynthesis; L-methionine biosynthesis via salvage pathway; L-methionine from S-methyl-5-thio-alpha-D-ribose 1-phosphate: step 2/6. Its function is as follows. Catalyzes the dehydration of methylthioribulose-1-phosphate (MTRu-1-P) into 2,3-diketo-5-methylthiopentyl-1-phosphate (DK-MTP-1-P). This is Methylthioribulose-1-phosphate dehydratase from Aspergillus fumigatus (strain CBS 144.89 / FGSC A1163 / CEA10) (Neosartorya fumigata).